We begin with the raw amino-acid sequence, 682 residues long: Heat shock 70 kDa protein 10, mitochondrial (682 aa).

Residues 1-50 (MATAALLRSIRRREVVSSPFSAYRCLSSSGKASLNSSYLGQNFRSFSRAF) constitute a mitochondrion transit peptide. Residues 646–682 (KIGEHMSGGSGGGSAPGGGSEGGSDQAPEAEYEEVKK) form a disordered region. The span at 651–667 (MSGGSGGGSAPGGGSEG) shows a compositional bias: gly residues. Residues 673-682 (PEAEYEEVKK) show a composition bias toward acidic residues.

This sequence belongs to the heat shock protein 70 (TC 1.A.33) family. DnaK subfamily.

Its subcellular location is the mitochondrion. In terms of biological role, chaperone involved in the maturation of iron-sulfur [Fe-S] cluster-containing proteins. Has a low intrinsic ATPase activity which is markedly stimulated by HSCB and ISU1. In cooperation with other chaperones, Hsp70s are key components that facilitate folding of de novo synthesized proteins, assist translocation of precursor proteins into organelles, and are responsible for degradation of damaged protein under stress conditions. The polypeptide is Heat shock 70 kDa protein 10, mitochondrial (Arabidopsis thaliana (Mouse-ear cress)).